Reading from the N-terminus, the 370-residue chain is 4-hydroxy-3-methylbut-2-en-1-yl diphosphate synthase (flavodoxin) (370 aa).

Residues C270, C273, C305, and E312 each contribute to the [4Fe-4S] cluster site.

The protein belongs to the IspG family. [4Fe-4S] cluster is required as a cofactor.

It catalyses the reaction (2E)-4-hydroxy-3-methylbut-2-enyl diphosphate + oxidized [flavodoxin] + H2O + 2 H(+) = 2-C-methyl-D-erythritol 2,4-cyclic diphosphate + reduced [flavodoxin]. It participates in isoprenoid biosynthesis; isopentenyl diphosphate biosynthesis via DXP pathway; isopentenyl diphosphate from 1-deoxy-D-xylulose 5-phosphate: step 5/6. Its function is as follows. Converts 2C-methyl-D-erythritol 2,4-cyclodiphosphate (ME-2,4cPP) into 1-hydroxy-2-methyl-2-(E)-butenyl 4-diphosphate. The protein is 4-hydroxy-3-methylbut-2-en-1-yl diphosphate synthase (flavodoxin) of Hahella chejuensis (strain KCTC 2396).